A 163-amino-acid chain; its full sequence is Protein YtsP (163 aa).

It belongs to the free Met sulfoxide reductase family.

The protein is Protein YtsP (ytsP) of Bacillus subtilis (strain 168).